The primary structure comprises 162 residues: CASP-like protein 0U1 (162 aa).

Residues 1–11 lie on the Cytoplasmic side of the membrane; that stretch reads MAAVEAAKTPR. The chain crosses the membrane as a helical span at residues 12–32; that stretch reads FILLIIEWVFALVAFAVMGHY. The Extracellular segment spans residues 33–43; sequence LFDDRRSSFEY. A helical transmembrane segment spans residues 44-64; it reads LTAICILVWLVVMIYMVILCC. The Cytoplasmic portion of the chain corresponds to 65 to 69; that stretch reads GRALP. A helical membrane pass occupies residues 70–90; that stretch reads PLIEAAIFLLFAILVFIAFLV. Residues 91–123 are Extracellular-facing; it reads TAVKCNNSETIVIAGQTISRKVCEGESEPKAAA. The N-linked (GlcNAc...) asparagine glycan is linked to N96. The helical transmembrane segment at 124–144 threads the bilayer; it reads AFAFLLGLLLAGSSVLGCIAF. Residues 145-162 are Cytoplasmic-facing; the sequence is RRPSAPPLSSFQNPTSSV.

The protein belongs to the Casparian strip membrane proteins (CASP) family. In terms of assembly, homodimer and heterodimers.

The protein resides in the cell membrane. The chain is CASP-like protein 0U1 from Chlorokybus atmophyticus (Soil alga).